The following is a 1099-amino-acid chain: MSLNNSSNVFLDSVPSNTNRFQVSVINENHESSAAADDNTDPPHYEETSFGDEAQKRLRISFRPGNQECYDNFLQSGETAKTDASFHAYDSHTNTYYLQTFGHNTMDAVPKIEYYRNTGSISGPKVNRPSLLEIHEQLAKNVAVTPSSADRVANGDGIPGDEQAENKEDDQAGVVKFGWVKGVLVRCMLNIWGVMLFIRLSWIVGEAGIGLGVLIILLSTMVTSITGLSTSAIATNGFVRGGGAYYLISRSLGPEFGGSIGLIFAFANAVAVAMYVVGFAETVVDLLKESDSMMVDPTNDIRIIGSITVVILLGISVAGMEWEAKAQVILLVILLIAIANFFIGTVIPSNNEKKSRGFFNYQASIFAENFGPRFTKGEGFFSVFAIFFPAATGILAGANISGDLEDPQDAIPRGTMLAIFITTVAYLGVAICVGACVVRDATGNMNDTIISGMNCNGSAACGLGYDFSRCRHEPCQYGLMNNFQVMSMVSGFGPLITAGIFSATLSSALASLVSAPKVFQALCKDNIYKALQFFAKGYGKNNEPLRGYILTFLIAMAFILIAELNTIAPIISNFFLASYALINFSCFHASYAKSPGWRPAYGIYNMWVSLFGAVLCCAVMFVINWWAAVITYVIEFFLYVYVTCKKPDVNWGSSTQALSYVSALDNALELTTVEDHVKNFRPQCIVLTGGPMTRPALLDITHAFTKNSGLCICCEVFVGPRKLCVKEMNSGMAKKQAWLIKNKIKAFYAAVAADCFRDGVRSLLQASGLGRMKPNTLVIGYKKNWRKAPLTEIENYVGIIHDAFDFEIGVVIVRISQGFDISQVLQVQEELERLEQERLALEATIKDNECEEESGGIRGLFKKAGKLNITKTTPKKDGSINTSQSMHVGEFNQKLVEASTQFKKKQEKGTIDVWWLFDDGGLTLLIPYILTLRKKWKDCKLRIYVGGKINRIEEEKIVMASLLSKFRIKFADIHIIGDINIRPNKESWKVFEEMIEPYRLHESCKDLTTAEKLKRETPWKITDAELEAVKEKSYRQVRLNELLQEHSRAANLIVLSLPVARKGSISDLLYMAWLEILTKNLPPVLLVRGNHKNVLTFYS.

At 1–177 (MSLNNSSNVF…EDDQAGVVKF (177 aa)) the chain is on the cytoplasmic side. The short motif at 20-23 (RFQV) is the RFXV motif element. Residues 31-53 (ESSAAADDNTDPPHYEETSFGDE) form a disordered region. Serine 61 bears the Phosphoserine mark. Residue serine 91 is modified to Phosphoserine; by OXSR1 and STK39. Threonine 95 carries the phosphothreonine modification. 2 positions are modified to phosphothreonine; by OXSR1 and STK39: threonine 100 and threonine 105. Position 118 is a phosphothreonine (threonine 118). Serine 120 is subject to Phosphoserine. At serine 130 the chain carries Phosphoserine; by AMPK. Position 148 is a phosphoserine (serine 148). Residues 178-198 (GWVKGVLVRCMLNIWGVMLFI) form a helical membrane-spanning segment. The Extracellular segment spans residues 199–201 (RLS). The helical transmembrane segment at 202 to 222 (WIVGEAGIGLGVLIILLSTMV) threads the bilayer. Over 223 to 259 (TSITGLSTSAIATNGFVRGGGAYYLISRSLGPEFGGS) the chain is Cytoplasmic. The helical transmembrane segment at 260–280 (IGLIFAFANAVAVAMYVVGFA) threads the bilayer. The Extracellular segment spans residues 281–302 (ETVVDLLKESDSMMVDPTNDIR). Residues 303 to 323 (IIGSITVVILLGISVAGMEWE) traverse the membrane as a helical segment. Over 324-327 (AKAQ) the chain is Cytoplasmic. Residues 328-348 (VILLVILLIAIANFFIGTVIP) traverse the membrane as a helical segment. Residues 349-379 (SNNEKKSRGFFNYQASIFAENFGPRFTKGEG) lie on the Extracellular side of the membrane. The helical transmembrane segment at 380-400 (FFSVFAIFFPAATGILAGANI) threads the bilayer. Topologically, residues 401-417 (SGDLEDPQDAIPRGTML) are cytoplasmic. A helical transmembrane segment spans residues 418–438 (AIFITTVAYLGVAICVGACVV). At 439 to 550 (RDATGNMNDT…NNEPLRGYIL (112 aa)) the chain is on the extracellular side. Asparagine 446 and asparagine 456 each carry an N-linked (GlcNAc...) asparagine glycan. Helical transmembrane passes span 551–571 (TFLI…APII) and 572–592 (SNFF…ASYA). At 593–609 (KSPGWRPAYGIYNMWVS) the chain is on the extracellular side. A helical membrane pass occupies residues 610–630 (LFGAVLCCAVMFVINWWAAVI). Over 631–1099 (TYVIEFFLYV…NHKNVLTFYS (469 aa)) the chain is Cytoplasmic.

This sequence belongs to the SLC12A transporter family. As to quaternary structure, when phosphorylated, interacts with PPP3CB. In terms of processing, phosphorylated at Ser-91, Thr-100 and Thr-105 by OXSR1/OSR1 and STK39/SPAK downstream of WNK kinases (WNK1, WNK2, WNK3 or WNK4), promoting its activity. In terms of tissue distribution, kidney; localizes to the thick ascending limbs (at protein level).

It localises to the apical cell membrane. The enzyme catalyses K(+)(out) + 2 chloride(out) + Na(+)(out) = K(+)(in) + 2 chloride(in) + Na(+)(in). Its activity is regulated as follows. Activated following phosphorylation by OXSR1/OSR1 and STK39/SPAK downstream of WNK kinases (WNK1, WNK2, WNK3 or WNK4). Renal sodium, potassium and chloride ion cotransporter that mediates the transepithelial NaCl reabsorption in the thick ascending limb and plays an essential role in the urinary concentration and volume regulation. Electrically silent transporter system. The polypeptide is Solute carrier family 12 member 1 (SLC12A1) (Homo sapiens (Human)).